Reading from the N-terminus, the 390-residue chain is Putative glutamate--cysteine ligase 2 (390 aa).

This sequence belongs to the glutamate--cysteine ligase type 2 family. YbdK subfamily.

The catalysed reaction is L-cysteine + L-glutamate + ATP = gamma-L-glutamyl-L-cysteine + ADP + phosphate + H(+). Functionally, ATP-dependent carboxylate-amine ligase which exhibits weak glutamate--cysteine ligase activity. This chain is Putative glutamate--cysteine ligase 2, found in Chloroflexus aurantiacus (strain ATCC 29366 / DSM 635 / J-10-fl).